Consider the following 460-residue polypeptide: tRNA(Ile)-lysidine synthase (460 aa).

Residue 30–35 (SGGLDS) coordinates ATP.

It belongs to the tRNA(Ile)-lysidine synthase family.

It is found in the cytoplasm. The catalysed reaction is cytidine(34) in tRNA(Ile2) + L-lysine + ATP = lysidine(34) in tRNA(Ile2) + AMP + diphosphate + H(+). Ligates lysine onto the cytidine present at position 34 of the AUA codon-specific tRNA(Ile) that contains the anticodon CAU, in an ATP-dependent manner. Cytidine is converted to lysidine, thus changing the amino acid specificity of the tRNA from methionine to isoleucine. This is tRNA(Ile)-lysidine synthase from Yersinia pestis.